A 120-amino-acid polypeptide reads, in one-letter code: Ribonuclease P protein component (120 aa).

It belongs to the RnpA family. Consists of a catalytic RNA component (M1 or rnpB) and a protein subunit.

The catalysed reaction is Endonucleolytic cleavage of RNA, removing 5'-extranucleotides from tRNA precursor.. Functionally, RNaseP catalyzes the removal of the 5'-leader sequence from pre-tRNA to produce the mature 5'-terminus. It can also cleave other RNA substrates such as 4.5S RNA. The protein component plays an auxiliary but essential role in vivo by binding to the 5'-leader sequence and broadening the substrate specificity of the ribozyme. This Bordetella avium (strain 197N) protein is Ribonuclease P protein component.